The sequence spans 354 residues: Neutral protease 2 homolog SNOG_02177 (354 aa).

The first 19 residues, M1–S19, serve as a signal peptide directing secretion. Residues D20–V182 constitute a propeptide that is removed on maturation. Disulfide bonds link C186-C257 and C264-C282. A glycan (N-linked (GlcNAc...) asparagine) is linked at N214. Zn(2+) is bound at residue H306. E307 is an active-site residue. A Zn(2+)-binding site is contributed by H310.

This sequence belongs to the peptidase M35 family. Requires Zn(2+) as cofactor.

The protein resides in the secreted. It catalyses the reaction Preferential cleavage of bonds with hydrophobic residues in P1'. Also 3-Asn-|-Gln-4 and 8-Gly-|-Ser-9 bonds in insulin B chain.. Secreted metalloproteinase that allows assimilation of proteinaceous substrates. Shows high activities on basic nuclear substrates such as histone and protamine. The sequence is that of Neutral protease 2 homolog SNOG_02177 from Phaeosphaeria nodorum (strain SN15 / ATCC MYA-4574 / FGSC 10173) (Glume blotch fungus).